Consider the following 322-residue polypeptide: Arginase (322 aa).

Mn(2+) contacts are provided by H113, D141, H143, and D145. Substrate-binding positions include 143-147, 154-156, and D200; these read HADIN and SGN. Residues D247 and D249 each contribute to the Mn(2+) site. Substrate contacts are provided by T261 and E292.

It belongs to the arginase family. In terms of assembly, homotrimer. It depends on Mn(2+) as a cofactor.

It carries out the reaction L-arginine + H2O = urea + L-ornithine. It functions in the pathway nitrogen metabolism; urea cycle; L-ornithine and urea from L-arginine: step 1/1. This Coccidioides posadasii (strain C735) (Valley fever fungus) protein is Arginase (ARG).